Reading from the N-terminus, the 214-residue chain is Phosphoribosylglycinamide formyltransferase (214 aa).

Position 12–14 (Gly-12–Asn-14) interacts with N(1)-(5-phospho-beta-D-ribosyl)glycinamide. (6R)-10-formyltetrahydrofolate contacts are provided by residues Leu-105–Leu-108 and Asn-123. The active-site Proton donor is the His-125. Residue Asp-167 coordinates (6R)-10-formyltetrahydrofolate. N(1)-(5-phospho-beta-D-ribosyl)glycinamide is bound at residue Glu-197.

It belongs to the GART family.

The catalysed reaction is N(1)-(5-phospho-beta-D-ribosyl)glycinamide + (6R)-10-formyltetrahydrofolate = N(2)-formyl-N(1)-(5-phospho-beta-D-ribosyl)glycinamide + (6S)-5,6,7,8-tetrahydrofolate + H(+). Its pathway is purine metabolism; IMP biosynthesis via de novo pathway; N(2)-formyl-N(1)-(5-phospho-D-ribosyl)glycinamide from N(1)-(5-phospho-D-ribosyl)glycinamide (10-formyl THF route): step 1/1. This chain is Phosphoribosylglycinamide formyltransferase, found in Saccharomyces cerevisiae (strain ATCC 204508 / S288c) (Baker's yeast).